Here is a 217-residue protein sequence, read N- to C-terminus: ATP phosphoribosyltransferase (217 aa).

The protein belongs to the ATP phosphoribosyltransferase family. Short subfamily. In terms of assembly, heteromultimer composed of HisG and HisZ subunits.

Its subcellular location is the cytoplasm. It catalyses the reaction 1-(5-phospho-beta-D-ribosyl)-ATP + diphosphate = 5-phospho-alpha-D-ribose 1-diphosphate + ATP. It functions in the pathway amino-acid biosynthesis; L-histidine biosynthesis; L-histidine from 5-phospho-alpha-D-ribose 1-diphosphate: step 1/9. Catalyzes the condensation of ATP and 5-phosphoribose 1-diphosphate to form N'-(5'-phosphoribosyl)-ATP (PR-ATP). Has a crucial role in the pathway because the rate of histidine biosynthesis seems to be controlled primarily by regulation of HisG enzymatic activity. In Polaromonas naphthalenivorans (strain CJ2), this protein is ATP phosphoribosyltransferase.